Reading from the N-terminus, the 470-residue chain is Transcriptional activator PmfR (470 aa).

Forms oligomers in solution, probably homotetramers.

It functions in the pathway alkaloid degradation; nicotine degradation [regulation]. In terms of biological role, transcriptional regulator involved in the activation of the purU-mabO-folD-nepA-nepB and mao-ORF55-nbr operons implicated in the nicotine catabolic pathway. The sequence GTTT-14 bp-AAAC seems to be the core binding site of the regulator upstream of the -35 promoter region of the operon. This is Transcriptional activator PmfR (pmfR) from Paenarthrobacter nicotinovorans (Arthrobacter nicotinovorans).